We begin with the raw amino-acid sequence, 482 residues long: Ribosomal protein S6 kinase beta-2 (482 aa).

Residues 1–26 (MAAVFDLDLETEEGSEGEGEPELSPA) are disordered. Residues 7–21 (LDLETEEGSEGEGEP) are compositionally biased toward acidic residues. Ser-15 carries the post-translational modification Phosphoserine. The Protein kinase domain maps to 67–328 (FELLRVLGKG…AADVQRHPFF (262 aa)). Residues 73 to 81 (LGKGGYGKV) and Lys-99 contribute to the ATP site. Asp-194 functions as the Proton acceptor in the catalytic mechanism. The 71-residue stretch at 329–399 (RHMNWDDLLA…VAPSVLDSIK (71 aa)) folds into the AGC-kinase C-terminal domain. The interval 407–482 (KLRSPRRLNS…SKRGRGRPGR (76 aa)) is disordered. Residues Ser-417 and Ser-423 each carry the phosphoserine modification. The span at 437 to 466 (PSLPEPTELPLPPLLPPPPPSTTAPLPIRP) shows a compositional bias: pro residues. A Nuclear localization signal motif is present at residues 471 to 477 (KKSKRGR). The segment covering 471–482 (KKSKRGRGRPGR) has biased composition (basic residues). At Ser-473 the chain carries Phosphoserine; by PKC.

Belongs to the protein kinase superfamily. AGC Ser/Thr protein kinase family. S6 kinase subfamily. Post-translationally, phosphorylated and activated by MTOR. Phosphorylation by PKC within the NLS in response to mitogenic stimuli causes cytoplasmic retention.

Its subcellular location is the cytoplasm. It is found in the nucleus. The catalysed reaction is L-seryl-[protein] + ATP = O-phospho-L-seryl-[protein] + ADP + H(+). It carries out the reaction L-threonyl-[protein] + ATP = O-phospho-L-threonyl-[protein] + ADP + H(+). In terms of biological role, phosphorylates specifically ribosomal protein S6. Seems to act downstream of mTOR signaling in response to growth factors and nutrients to promote cell proliferation, cell growth and cell cycle progression in an alternative pathway regulated by MEAK7. This Homo sapiens (Human) protein is Ribosomal protein S6 kinase beta-2 (RPS6KB2).